The chain runs to 556 residues: Membrane protein insertase YidC (556 aa).

5 helical membrane-spanning segments follow: residues 6–26 (IVLY…WQID), 332–352 (LDLT…FSLM), 358–378 (VVGN…LAFY), 428–448 (LGGC…YWVL), and 501–521 (VMMF…SGLV).

It belongs to the OXA1/ALB3/YidC family. Type 1 subfamily. Interacts with the Sec translocase complex via SecD. Specifically interacts with transmembrane segments of nascent integral membrane proteins during membrane integration.

Its subcellular location is the cell inner membrane. Required for the insertion and/or proper folding and/or complex formation of integral membrane proteins into the membrane. Involved in integration of membrane proteins that insert both dependently and independently of the Sec translocase complex, as well as at least some lipoproteins. Aids folding of multispanning membrane proteins. This chain is Membrane protein insertase YidC, found in Legionella pneumophila (strain Lens).